Here is a 345-residue protein sequence, read N- to C-terminus: MGVCGYLFLPWKCLVVVSLRLLFLVPTGVPVRSGDATFPKAMDNVTVRQGESATLRCTIDDRVTRVAWLNRSTILYAGNDKWSIDPRVIILVNTPTQYSIMIQNVDVYDEGPYTCSVQTDNHPKTSRVHLIVQVPPQIMNISSDITVNEISSVTLLCLAIGRPEPTVTWRHLSVKEGQGFVSEDEYLEISDIKRDQSGEYECSALNDVAAPDVRKVKITVNYPPYISKAKNTGVSVGQKGILSCEASAVPMAEFQWFKEDTRLATGLDGVRIENKGRISTLTFFNVSEKDYGNYTCVATNKLGNTNASITLYGPGAVIDGVNSASRALACLWLSGTFFAHFFIKF.

The N-terminal stretch at 1 to 27 (MGVCGYLFLPWKCLVVVSLRLLFLVPT) is a signal peptide. Ig-like C2-type domains lie at 39 to 126 (PKAM…PKTS), 136 to 219 (PQIM…VKIT), and 223 to 310 (PPYI…ASIT). N44, N70, and N140 each carry an N-linked (GlcNAc...) asparagine glycan. The cysteines at positions 57 and 115 are disulfide-linked. Cystine bridges form between C157–C202 and C244–C296. N-linked (GlcNAc...) asparagine glycans are attached at residues N285, N293, and N306. The GPI-anchor amidated asparagine moiety is linked to residue N322. A propeptide spans 323-345 (SASRALACLWLSGTFFAHFFIKF) (removed in mature form).

The protein belongs to the immunoglobulin superfamily. IgLON family.

Its subcellular location is the cell membrane. Binds opioids in the presence of acidic lipids; probably involved in cell contact. The chain is Opioid-binding protein/cell adhesion molecule (Opcml) from Rattus norvegicus (Rat).